The sequence spans 73 residues: Translation initiation factor IF-1 (73 aa).

The region spanning M1–R72 is the S1-like domain.

The protein belongs to the IF-1 family. In terms of assembly, component of the 30S ribosomal translation pre-initiation complex which assembles on the 30S ribosome in the order IF-2 and IF-3, IF-1 and N-formylmethionyl-tRNA(fMet); mRNA recruitment can occur at any time during PIC assembly.

The protein localises to the cytoplasm. Functionally, one of the essential components for the initiation of protein synthesis. Stabilizes the binding of IF-2 and IF-3 on the 30S subunit to which N-formylmethionyl-tRNA(fMet) subsequently binds. Helps modulate mRNA selection, yielding the 30S pre-initiation complex (PIC). Upon addition of the 50S ribosomal subunit IF-1, IF-2 and IF-3 are released leaving the mature 70S translation initiation complex. This Gloeobacter violaceus (strain ATCC 29082 / PCC 7421) protein is Translation initiation factor IF-1.